The primary structure comprises 230 residues: L-aspartate/glutamate-specific racemase (230 aa).

Residues methionine 10, glutamine 52, and 83-85 contribute to the substrate site; that span reads TNT. Threonine 83 serves as the catalytic Proton donor. The active-site Proton acceptor is the cysteine 197. 198–199 provides a ligand contact to substrate; the sequence is TE.

It belongs to the aspartate/glutamate racemases family. In terms of assembly, homodimer.

The enzyme catalyses L-glutamate = D-glutamate. It carries out the reaction L-aspartate = D-aspartate. In terms of biological role, exhibits racemase activity for both L-glutamate and L-aspartate. The chain is L-aspartate/glutamate-specific racemase from Escherichia coli O157:H7.